Reading from the N-terminus, the 209-residue chain is Ribosomal RNA large subunit methyltransferase E (209 aa).

S-adenosyl-L-methionine is bound by residues glycine 63, tryptophan 65, aspartate 83, aspartate 99, and aspartate 124. Catalysis depends on lysine 164, which acts as the Proton acceptor.

It belongs to the class I-like SAM-binding methyltransferase superfamily. RNA methyltransferase RlmE family.

It is found in the cytoplasm. It carries out the reaction uridine(2552) in 23S rRNA + S-adenosyl-L-methionine = 2'-O-methyluridine(2552) in 23S rRNA + S-adenosyl-L-homocysteine + H(+). Specifically methylates the uridine in position 2552 of 23S rRNA at the 2'-O position of the ribose in the fully assembled 50S ribosomal subunit. This chain is Ribosomal RNA large subunit methyltransferase E, found in Cronobacter sakazakii (strain ATCC BAA-894) (Enterobacter sakazakii).